The sequence spans 416 residues: Tyrosine--tRNA ligase (416 aa).

Residue Tyr40 participates in L-tyrosine binding. A 'HIGH' region motif is present at residues 45–54 (ATAASLHVGH). 2 residues coordinate L-tyrosine: Tyr177 and Gln181. A 'KMSKS' region motif is present at residues 237 to 241 (KMGKS). Lys240 contacts ATP. In terms of domain architecture, S4 RNA-binding spans 351–416 (LSVAHFLVAA…RKKHKLVRLS (66 aa)).

It belongs to the class-I aminoacyl-tRNA synthetase family. TyrS type 1 subfamily. In terms of assembly, homodimer.

It localises to the cytoplasm. The catalysed reaction is tRNA(Tyr) + L-tyrosine + ATP = L-tyrosyl-tRNA(Tyr) + AMP + diphosphate + H(+). Catalyzes the attachment of tyrosine to tRNA(Tyr) in a two-step reaction: tyrosine is first activated by ATP to form Tyr-AMP and then transferred to the acceptor end of tRNA(Tyr). The polypeptide is Tyrosine--tRNA ligase (Cereibacter sphaeroides (strain KD131 / KCTC 12085) (Rhodobacter sphaeroides)).